Reading from the N-terminus, the 182-residue chain is Lipoprotein signal peptidase (182 aa).

Helical transmembrane passes span 15–35 (LYIGVIFLGIILDLVTKFLVI), 44–64 (LEVLGSFFRMTLTFNTGFVFG), 65–85 (AFQDNAIPSLIATGIAIVFLI), and 97–117 (PWGWNLVMAGAFGNFLDKFFV). Residues Asp140 and Asp162 contribute to the active site. Residues 155 to 175 (WPAFNVADSCVTIGLTILIFT) form a helical membrane-spanning segment.

The protein belongs to the peptidase A8 family.

It is found in the cell inner membrane. The enzyme catalyses Release of signal peptides from bacterial membrane prolipoproteins. Hydrolyzes -Xaa-Yaa-Zaa-|-(S,diacylglyceryl)Cys-, in which Xaa is hydrophobic (preferably Leu), and Yaa (Ala or Ser) and Zaa (Gly or Ala) have small, neutral side chains.. It functions in the pathway protein modification; lipoprotein biosynthesis (signal peptide cleavage). Functionally, this protein specifically catalyzes the removal of signal peptides from prolipoproteins. This chain is Lipoprotein signal peptidase, found in Leptospira borgpetersenii serovar Hardjo-bovis (strain L550).